Reading from the N-terminus, the 580-residue chain is Laccase-5 (580 aa).

A signal peptide spans 1–25 (MDVTKSLLCFISFVAFLLFSSVAEA). Plastocyanin-like domains follow at residues 34–150 (IIQA…PPAG) and 160–312 (RNVP…YKSA). Residue N80 is glycosylated (N-linked (GlcNAc...) asparagine). Cu cation-binding residues include H84, H86, H129, and H131. 7 N-linked (GlcNAc...) asparagine glycosylation sites follow: N189, N300, N340, N392, N402, N410, and N443. A Plastocyanin-like 3 domain is found at 428 to 564 (DFPAKPPVKF…AMAFLVENGN (137 aa)). 7 residues coordinate Cu cation: H481, H484, H486, H543, C544, H545, and H549.

This sequence belongs to the multicopper oxidase family. Cu cation serves as cofactor. In terms of tissue distribution, ubiquitous and constitutive.

The protein localises to the secreted. It localises to the extracellular space. The protein resides in the apoplast. The enzyme catalyses 4 hydroquinone + O2 = 4 benzosemiquinone + 2 H2O. Functionally, lignin degradation and detoxification of lignin-derived products. The chain is Laccase-5 (LAC5) from Arabidopsis thaliana (Mouse-ear cress).